We begin with the raw amino-acid sequence, 197 residues long: uncharacterized protein (197 aa).

One can recognise a PfpI endopeptidase domain in the interval 29–166 (DWSVHTVSLD…FTNLILEMID (138 aa)). C98 acts as the Nucleophile in catalysis.

This sequence belongs to the peptidase C56 family.

This is an uncharacterized protein from Bacillus subtilis (strain 168).